The following is a 557-amino-acid chain: 2-succinyl-5-enolpyruvyl-6-hydroxy-3-cyclohexene-1-carboxylate synthase (557 aa).

It belongs to the TPP enzyme family. MenD subfamily. Homodimer. Mg(2+) serves as cofactor. Mn(2+) is required as a cofactor. Requires thiamine diphosphate as cofactor.

It carries out the reaction isochorismate + 2-oxoglutarate + H(+) = 5-enolpyruvoyl-6-hydroxy-2-succinyl-cyclohex-3-ene-1-carboxylate + CO2. It participates in quinol/quinone metabolism; 1,4-dihydroxy-2-naphthoate biosynthesis; 1,4-dihydroxy-2-naphthoate from chorismate: step 2/7. Its pathway is quinol/quinone metabolism; menaquinone biosynthesis. Functionally, catalyzes the thiamine diphosphate-dependent decarboxylation of 2-oxoglutarate and the subsequent addition of the resulting succinic semialdehyde-thiamine pyrophosphate anion to isochorismate to yield 2-succinyl-5-enolpyruvyl-6-hydroxy-3-cyclohexene-1-carboxylate (SEPHCHC). The chain is 2-succinyl-5-enolpyruvyl-6-hydroxy-3-cyclohexene-1-carboxylate synthase from Phocaeicola vulgatus (strain ATCC 8482 / DSM 1447 / JCM 5826 / CCUG 4940 / NBRC 14291 / NCTC 11154) (Bacteroides vulgatus).